A 595-amino-acid polypeptide reads, in one-letter code: Elongation factor 4 (595 aa).

A tr-type G domain is found at 2-183 (KNIRNFCIIA…TIVEKVPAPK (182 aa)). GTP contacts are provided by residues 14–19 (DHGKST) and 130–133 (NKID).

The protein belongs to the TRAFAC class translation factor GTPase superfamily. Classic translation factor GTPase family. LepA subfamily.

It is found in the cell inner membrane. It carries out the reaction GTP + H2O = GDP + phosphate + H(+). In terms of biological role, required for accurate and efficient protein synthesis under certain stress conditions. May act as a fidelity factor of the translation reaction, by catalyzing a one-codon backward translocation of tRNAs on improperly translocated ribosomes. Back-translocation proceeds from a post-translocation (POST) complex to a pre-translocation (PRE) complex, thus giving elongation factor G a second chance to translocate the tRNAs correctly. Binds to ribosomes in a GTP-dependent manner. The protein is Elongation factor 4 of Parabacteroides distasonis (strain ATCC 8503 / DSM 20701 / CIP 104284 / JCM 5825 / NCTC 11152).